Here is a 402-residue protein sequence, read N- to C-terminus: Phosphoglycerate kinase (402 aa).

Substrate contacts are provided by residues 24-26 (DFN), Arg-40, 63-66 (HFGR), Arg-122, and Arg-155. ATP contacts are provided by residues Lys-206, Gly-297, Glu-328, and 358–361 (GGDS).

Belongs to the phosphoglycerate kinase family. As to quaternary structure, monomer.

It localises to the cytoplasm. The enzyme catalyses (2R)-3-phosphoglycerate + ATP = (2R)-3-phospho-glyceroyl phosphate + ADP. Its pathway is carbohydrate degradation; glycolysis; pyruvate from D-glyceraldehyde 3-phosphate: step 2/5. This is Phosphoglycerate kinase from Prochlorococcus marinus (strain MIT 9312).